A 373-amino-acid polypeptide reads, in one-letter code: tRNA-specific 2-thiouridylase MnmA (373 aa).

ATP-binding positions include Gly-12–Ser-19 and Met-38. Residues Asn-98 to Asp-100 are interaction with target base in tRNA. The Nucleophile role is filled by Cys-103. A disulfide bridge links Cys-103 with Cys-200. Gly-127 is a binding site for ATP. The tract at residues Lys-150 to Gln-152 is interaction with tRNA. The Cysteine persulfide intermediate role is filled by Cys-200. An interaction with tRNA region spans residues Arg-312–Tyr-313.

The protein belongs to the MnmA/TRMU family.

It localises to the cytoplasm. The catalysed reaction is S-sulfanyl-L-cysteinyl-[protein] + uridine(34) in tRNA + AH2 + ATP = 2-thiouridine(34) in tRNA + L-cysteinyl-[protein] + A + AMP + diphosphate + H(+). Catalyzes the 2-thiolation of uridine at the wobble position (U34) of tRNA, leading to the formation of s(2)U34. This is tRNA-specific 2-thiouridylase MnmA from Streptococcus mutans serotype c (strain ATCC 700610 / UA159).